Here is a 608-residue protein sequence, read N- to C-terminus: UvrABC system protein C (608 aa).

A GIY-YIG domain is found at 18–96 (NQPGVYRMYN…IKKYKPRYNV (79 aa)). Positions 206–241 (KQVIDSLVQHMERASTDLRFEAAARYRDQISALNKV) constitute a UVR domain.

It belongs to the UvrC family. In terms of assembly, interacts with UvrB in an incision complex.

The protein localises to the cytoplasm. The UvrABC repair system catalyzes the recognition and processing of DNA lesions. UvrC both incises the 5' and 3' sides of the lesion. The N-terminal half is responsible for the 3' incision and the C-terminal half is responsible for the 5' incision. This Pseudoalteromonas atlantica (strain T6c / ATCC BAA-1087) protein is UvrABC system protein C.